The primary structure comprises 1192 residues: Integrator complex subunit 2 (1192 aa).

The chain crosses the membrane as a helical span at residues 420-436 (FVSLSFCMLLAFSTLVS).

It belongs to the Integrator subunit 2 family. As to quaternary structure, component of the Integrator complex, composed of core subunits INTS1, INTS2, INTS3, INTS4, INTS5, INTS6, INTS7, INTS8, INTS9/RC74, INTS10, INTS11/CPSF3L, INTS12, INTS13, INTS14 and INTS15. The core complex associates with protein phosphatase 2A subunits PPP2CA and PPP2R1A, to form the Integrator-PP2A (INTAC) complex.

Its subcellular location is the nucleus. It localises to the nucleus membrane. The protein resides in the cytoplasm. Functionally, component of the integrator complex, a multiprotein complex that terminates RNA polymerase II (Pol II) transcription in the promoter-proximal region of genes. The integrator complex provides a quality checkpoint during transcription elongation by driving premature transcription termination of transcripts that are unfavorably configured for transcriptional elongation: the complex terminates transcription by (1) catalyzing dephosphorylation of the C-terminal domain (CTD) of Pol II subunit POLR2A/RPB1 and SUPT5H/SPT5, (2) degrading the exiting nascent RNA transcript via endonuclease activity and (3) promoting the release of Pol II from bound DNA. The integrator complex is also involved in terminating the synthesis of non-coding Pol II transcripts, such as enhancer RNAs (eRNAs), small nuclear RNAs (snRNAs), telomerase RNAs and long non-coding RNAs (lncRNAs). This is Integrator complex subunit 2 (INTS2) from Gallus gallus (Chicken).